Consider the following 336-residue polypeptide: Glucokinase (336 aa).

13–18 (ADVGGT) is a binding site for ATP.

It belongs to the bacterial glucokinase family.

It localises to the cytoplasm. It catalyses the reaction D-glucose + ATP = D-glucose 6-phosphate + ADP + H(+). This chain is Glucokinase, found in Cupriavidus metallidurans (strain ATCC 43123 / DSM 2839 / NBRC 102507 / CH34) (Ralstonia metallidurans).